The primary structure comprises 553 residues: Phosphomethylpyrimidine synthase (553 aa).

Substrate-binding positions include Asn-192, Met-221, Tyr-250, His-286, 306-308 (SRG), 347-350 (DGLR), and Glu-386. His-390 is a binding site for Zn(2+). Tyr-413 is a binding site for substrate. His-454 serves as a coordination point for Zn(2+). Positions 534, 537, and 542 each coordinate [4Fe-4S] cluster.

It belongs to the ThiC family. Homodimer. The cofactor is [4Fe-4S] cluster.

It carries out the reaction 5-amino-1-(5-phospho-beta-D-ribosyl)imidazole + S-adenosyl-L-methionine = 4-amino-2-methyl-5-(phosphooxymethyl)pyrimidine + CO + 5'-deoxyadenosine + formate + L-methionine + 3 H(+). It functions in the pathway cofactor biosynthesis; thiamine diphosphate biosynthesis. Catalyzes the synthesis of the hydroxymethylpyrimidine phosphate (HMP-P) moiety of thiamine from aminoimidazole ribotide (AIR) in a radical S-adenosyl-L-methionine (SAM)-dependent reaction. This is Phosphomethylpyrimidine synthase from Anaplasma marginale (strain St. Maries).